The chain runs to 946 residues: Sorting nexin-14 (946 aa).

The next 2 membrane-spanning stretches (helical) occupy residues 24–44 and 49–69; these read ICRQYPLFCFLLLCLSAASLL and IHILMIFWSFVAGVVTFYCSL. Residues 130 to 304 form the PXA domain; the sequence is SSKVDASLSE…LLIIFIDDSP (175 aa). Residues 336–468 enclose the RGS domain; sequence ELKQIREQQD…CHSDEYFRQL (133 aa). Serine 548 is subject to Phosphoserine. Positions 570–690 constitute a PX domain; that stretch reads PYVDFFEDPS…DFLSPNGGET (121 aa).

It belongs to the sorting nexin family. In terms of tissue distribution, widely expressed both in fetal and adult tissues.

It localises to the lysosome membrane. The protein resides in the late endosome membrane. Its subcellular location is the cell projection. The protein localises to the dendrite. Its function is as follows. Plays a role in maintaining normal neuronal excitability and synaptic transmission. May be involved in several stages of intracellular trafficking. Required for autophagosome clearance, possibly by mediating the fusion of lysosomes with autophagosomes. Binds phosphatidylinositol 3,5-bisphosphate (PtdIns(3,5)P2), a key component of late endosomes/lysosomes. Does not bind phosphatidylinositol 3-phosphate (PtdIns(3P)). The sequence is that of Sorting nexin-14 (SNX14) from Homo sapiens (Human).